Consider the following 113-residue polypeptide: U11-theraphotoxin-Hhn1a (113 aa).

An N-terminal signal peptide occupies residues 1–21 (MDTVRVAFLLVLVLAVSLGQA). Residues 22–74 (DKDENRMEMQEKTEQGKSYLDFAENLLLQKLEELEAKLLEEDSEESRNSRQKR) constitute a propeptide that is removed on maturation. Residues 60-69 (LEEDSEESRN) are compositionally biased toward basic and acidic residues. A disordered region spans residues 60–83 (LEEDSEESRNSRQKRCIGEGVPCD). 3 cysteine pairs are disulfide-bonded: Cys75–Cys90, Cys82–Cys95, and Cys89–Cys110.

The protein belongs to the neurotoxin 14 (magi-1) family. 01 (HNTX-16) subfamily. As to expression, expressed by the venom gland.

The protein resides in the secreted. Its function is as follows. Probable ion channel inhibitor. This chain is U11-theraphotoxin-Hhn1a, found in Cyriopagopus hainanus (Chinese bird spider).